Reading from the N-terminus, the 413-residue chain is NAD-dependent dihydropyrimidine dehydrogenase subunit PreT (413 aa).

Residue E287 participates in NAD(+) binding.

It belongs to the NADH dehydrogenase family. Heterotetramer of 2 PreA and 2 PreT subunits.

The enzyme catalyses 5,6-dihydrouracil + NAD(+) = uracil + NADH + H(+). It catalyses the reaction 5,6-dihydrothymine + NAD(+) = thymine + NADH + H(+). Functionally, involved in pyrimidine base degradation. Catalyzes physiologically the reduction of uracil to 5,6-dihydrouracil (DHU) by using NADH as a specific cosubstrate. It also catalyzes the reverse reaction and the reduction of thymine to 5,6-dihydrothymine (DHT). This chain is NAD-dependent dihydropyrimidine dehydrogenase subunit PreT (preT), found in Salmonella typhimurium (strain LT2 / SGSC1412 / ATCC 700720).